A 425-amino-acid chain; its full sequence is 5-hydroxytryptamine receptor 7 (425 aa).

The Extracellular portion of the chain corresponds to 1-72; sequence MLIQVQPSHL…LLYGDTEKIV (72 aa). N-linked (GlcNAc...) asparagine glycans are attached at residues Asn14, Asn41, and Asn51. Residues 73–97 traverse the membrane as a helical segment; it reads IGVVLSIITLFTIAGNALVIISVCI. The Cytoplasmic segment spans residues 98–107; sequence VKKLRQPSNY. A helical membrane pass occupies residues 108 to 129; the sequence is LVVSLAAADLSVAVAVMPFVII. Residues 130-141 are Extracellular-facing; the sequence is TDLVGGEWLFGK. The helical transmembrane segment at 142–167 threads the bilayer; sequence VFCNVFIAMDVMCCTASIMTLCVISV. Cys144 and Cys220 are joined by a disulfide. Asp151 contacts serotonin. The Cytoplasmic portion of the chain corresponds to 168 to 187; the sequence is DRYLGITRPLTYPARQNGKL. A helical transmembrane segment spans residues 188–208; the sequence is MAKMVFIVWLLSASITLPPLF. The Extracellular segment spans residues 209–226; sequence GWAKNVNVERVCLISQDF. A helical transmembrane segment spans residues 227–249; it reads GYTVYSTAVAFYIPMTVMLVMYQ. Topologically, residues 250–322 are cytoplasmic; it reads RIFVAAKISA…SIFKREQKAA (73 aa). A helical membrane pass occupies residues 323–348; that stretch reads RTLGIIVGAFTFCWLPFFLLSTARPF. The Extracellular segment spans residues 349-359; sequence ICGIMCSCMPL. Residues 360–383 form a helical membrane-spanning segment; sequence RLERTLLWLGYTNSLINPLIYAFF. The Cytoplasmic portion of the chain corresponds to 384 to 425; sequence NRDLRTTFWNLLRCKYTNINRRLSAASMHEALKVTERHEGIL. Cys397 carries S-palmitoyl cysteine lipidation.

The protein belongs to the G-protein coupled receptor 1 family.

It is found in the cell membrane. G-protein coupled receptor for 5-hydroxytryptamine (serotonin), a biogenic hormone that functions as a neurotransmitter, a hormone and a mitogen. Ligand binding causes a conformation change that triggers signaling via guanine nucleotide-binding proteins (G proteins) and modulates the activity of downstream effectors. HTR7 is coupled to G(s) G alpha proteins and mediates activation of adenylate cyclase activity. In Xenopus laevis (African clawed frog), this protein is 5-hydroxytryptamine receptor 7 (htr7).